Reading from the N-terminus, the 471-residue chain is GTPase Der (471 aa).

2 EngA-type G domains span residues 5-168 (PVIA…TDLE) and 186-359 (IRVA…DSAF). Residues 11–18 (GRPNVGKS), 58–62 (DTGGI), 120–123 (NKTD), 192–199 (GRPNVGKS), 239–243 (DTAGV), and 304–307 (NKWD) each bind GTP. In terms of domain architecture, KH-like spans 360–444 (IKIGTNELTR…PIRLEFKSGT (85 aa)).

The protein belongs to the TRAFAC class TrmE-Era-EngA-EngB-Septin-like GTPase superfamily. EngA (Der) GTPase family. In terms of assembly, associates with the 50S ribosomal subunit.

Functionally, GTPase that plays an essential role in the late steps of ribosome biogenesis. This is GTPase Der from Alcanivorax borkumensis (strain ATCC 700651 / DSM 11573 / NCIMB 13689 / SK2).